The following is a 423-amino-acid chain: Glutamate-1-semialdehyde 2,1-aminomutase (423 aa).

Lysine 258 is modified (N6-(pyridoxal phosphate)lysine).

The protein belongs to the class-III pyridoxal-phosphate-dependent aminotransferase family. HemL subfamily. Pyridoxal 5'-phosphate serves as cofactor.

Its subcellular location is the cytoplasm. The enzyme catalyses (S)-4-amino-5-oxopentanoate = 5-aminolevulinate. It participates in porphyrin-containing compound metabolism; protoporphyrin-IX biosynthesis; 5-aminolevulinate from L-glutamyl-tRNA(Glu): step 2/2. The chain is Glutamate-1-semialdehyde 2,1-aminomutase from Pyrobaculum aerophilum (strain ATCC 51768 / DSM 7523 / JCM 9630 / CIP 104966 / NBRC 100827 / IM2).